A 368-amino-acid polypeptide reads, in one-letter code: C-glycoside deglycosidase alpha subunit (368 aa).

E145 serves as a coordination point for a divalent metal cation. Residue H147 is the Proton acceptor of the active site. A divalent metal cation-binding residues include D177, H275, and E311.

The protein belongs to the C-glycoside deglycosidase alpha subunit family. As to quaternary structure, heterodimer composed of an alpha subunit (CarB) and a beta subunit (CarC). Requires a divalent metal cation as cofactor.

The enzyme catalyses 3''-dehydroisovitexin = 1,5-anhydro-D-erythro-hex-1-en-3-ulose + apigenin. The catalysed reaction is 3''-dehydroisoorientin = 1,5-anhydro-D-erythro-hex-1-en-3-ulose + luteolin. Functionally, carbon-carbon bond-cleaving enzyme which participates in the metabolism of C-glycosides. Acts on the C6-glycosylated compounds 3''-dehydroisovitexin (3''-oxo-isovitexin) and 3''-dehydroisoorientin (3''-oxo-homoorientin). Shows weak activity with 3'-dehydromangiferin (3'-oxo-mangiferin). This Microbacterium trichothecenolyticum (Aureobacterium trichothecenolyticum) protein is C-glycoside deglycosidase alpha subunit.